Consider the following 128-residue polypeptide: Small ribosomal subunit protein uS11 (128 aa).

Belongs to the universal ribosomal protein uS11 family. As to quaternary structure, part of the 30S ribosomal subunit. Interacts with proteins S7 and S18. Binds to IF-3.

Located on the platform of the 30S subunit, it bridges several disparate RNA helices of the 16S rRNA. Forms part of the Shine-Dalgarno cleft in the 70S ribosome. In Acinetobacter baylyi (strain ATCC 33305 / BD413 / ADP1), this protein is Small ribosomal subunit protein uS11.